We begin with the raw amino-acid sequence, 366 residues long: Putative actin-9 (366 aa).

The protein belongs to the actin family. Polymerization of globular actin (G-actin) leads to a structural filament (F-actin) in the form of a two-stranded helix. The binding of profilin to monomeric G-actin cause the sequestration of actin into profilactin complexes, and prevents the polymerization.

The protein resides in the cytoplasm. It localises to the cytoskeleton. Its function is as follows. Actins are highly conserved proteins that are involved in various types of cell motility and are ubiquitously expressed in all eukaryotic cells. Essential component of cell cytoskeleton; plays an important role in cytoplasmic streaming, cell shape determination, cell division, organelle movement and extension growth. This chain is Putative actin-9 (ACT9), found in Arabidopsis thaliana (Mouse-ear cress).